Reading from the N-terminus, the 292-residue chain is Aquaporin-3 (292 aa).

Over 1 to 24 (MGRQKELMNRCGEMLHIRYRLLRQ) the chain is Cytoplasmic. A helical transmembrane segment spans residues 25–42 (ALAECLGTLILVMFGCGS). Topologically, residues 43 to 56 (VAQVVLSRGTHGGF) are extracellular. A helical transmembrane segment spans residues 57–74 (LTINLAFGFAVTLGILVA). The Cytoplasmic portion of the chain corresponds to 75 to 78 (GQVS). An intramembrane region (discontinuously helical) is located at residues 79-92 (GAHLNPAVTFAMCF). Residues 83-85 (NPA) carry the NPA 1 motif. At 93–100 (LAREPWIK) the chain is on the cytoplasmic side. The chain crosses the membrane as a helical span at residues 101–121 (LPIYALAQTLGAFLGAGIVFG). The Extracellular portion of the chain corresponds to 122–159 (LYYDAIWAFANNELFVSGPNGTAGIFATYPSGHLDMVN). Residue asparagine 141 is glycosylated (N-linked (GlcNAc...) asparagine). Residues 160-177 (GFFDQFIGTAALIVCVLA) form a helical membrane-spanning segment. Residues 178–189 (IVDPYNNPVPRG) lie on the Cytoplasmic side of the membrane. A helical transmembrane segment spans residues 190–206 (LEAFTVGLVVLVIGTSM). The Extracellular segment spans residues 207–210 (GFNS). The segment at residues 211 to 224 (GYAVNPARDFGPRL) is an intramembrane region (discontinuously helical). The NPA 2 motif lies at 215 to 217 (NPA). Over 225–242 (FTALAGWGSEVFTTGRHW) the chain is Extracellular. A helical membrane pass occupies residues 243–264 (WWVPIVSPLLGSIAGVFVYQLM). Residues 265–292 (IGCHLEQPPPSTEEENVKLAHMKHKEQI) lie on the Cytoplasmic side of the membrane.

Belongs to the MIP/aquaporin (TC 1.A.8) family. In terms of assembly, homotetramer; each monomer provides an independent glycerol/water pore. Could also exist in other oligomeric states. In terms of tissue distribution, detected in principal cells in collecting ducts in kidney medulla (at protein level). Renal medulla and colon. Predominantly in the inner medulla. Expressed in basal layer of epidermal keratinocytes.

Its subcellular location is the cell membrane. It localises to the basolateral cell membrane. The catalysed reaction is glycerol(in) = glycerol(out). The enzyme catalyses H2O(in) = H2O(out). It catalyses the reaction urea(in) = urea(out). It carries out the reaction H2O2(out) = H2O2(in). Functionally, aquaglyceroporins form homotetrameric transmembrane channels, with each monomer independently mediating glycerol and water transport across the plasma membrane along their osmotic gradient. Could also be permeable to urea. Also participates in cell permeability to H2O2 and H2O2-mediated signaling. In skin, transports glycerol to the epidermis and stratum corneum, where it maintains hydration, elasticity, and supports lipid biosynthesis for barrier repair. In kidney, contributes to the reabsorption of water, helping the body maintain proper fluid balance. This is Aquaporin-3 from Mus musculus (Mouse).